Reading from the N-terminus, the 117-residue chain is Probable prefoldin subunit 1 (117 aa).

It belongs to the prefoldin subunit beta family. Heterohexamer of two PFD-alpha type and four PFD-beta type subunits.

Its subcellular location is the cytoplasm. Its function is as follows. Binds specifically to cytosolic chaperonin (c-CPN) and transfers target proteins to it. Binds to nascent polypeptide chain and promotes folding in an environment in which there are many competing pathways for nonnative proteins. Has a role in gonadogenesis. The sequence is that of Probable prefoldin subunit 1 (pfd-1) from Caenorhabditis briggsae.